A 418-amino-acid chain; its full sequence is MRVAMISMHTSPLQQPGTGDSGGMNVYILSTATELAKQGIEVDIYTRATRPSQGEIVRVAENLRVINIAAGPYEGLSKEELPTQLAAFTGGMLSFTRREKVTYDLIHSHYWLSGQVGWLLRDLWRIPLIHTAHTLAAVKNSYRDDSDTPESEARRICEQQLVDNADVLAVNTQEEMQDLMHHYDADPDRISVVSPGADVELYSPGNDRATERSRRELGIPLHTKVVAFVGRLQPFKGPQVLIKAVAALFDRDPDRNLRVIICGGPSGPNATPDTYRHMAEELGVEKRIRFLDPRPPSELVAVYRAADIVAVPSFNESFGLVAMEAQASGTPVIAARVGGLPIAVAEGETGLLVDGHSPHAWADALATLLDDDETRIRMGEDAVEHARTFSWAATAAQLSSLYNDAIANENVDGETHHG.

1D-myo-inositol 3-phosphate is bound at residue histidine 9. Residues 15 to 16 (QP) and glycine 23 contribute to the UDP-N-acetyl-alpha-D-glucosamine site. 1D-myo-inositol 3-phosphate is bound by residues 20–25 (DSGGMN), lysine 78, tyrosine 110, threonine 134, and arginine 154. Positions 231, 236, and 294 each coordinate UDP-N-acetyl-alpha-D-glucosamine. The Mg(2+) site is built by tyrosine 303, arginine 304, and alanine 306. UDP-N-acetyl-alpha-D-glucosamine contacts are provided by glutamate 316 and glutamate 324. Threonine 330 provides a ligand contact to Mg(2+).

It belongs to the glycosyltransferase group 1 family. MshA subfamily. Homodimer.

The enzyme catalyses 1D-myo-inositol 3-phosphate + UDP-N-acetyl-alpha-D-glucosamine = 1D-myo-inositol 2-acetamido-2-deoxy-alpha-D-glucopyranoside 3-phosphate + UDP + H(+). Functionally, catalyzes the transfer of a N-acetyl-glucosamine moiety to 1D-myo-inositol 3-phosphate to produce 1D-myo-inositol 2-acetamido-2-deoxy-glucopyranoside 3-phosphate in the mycothiol biosynthesis pathway. In Corynebacterium glutamicum (strain R), this protein is D-inositol 3-phosphate glycosyltransferase.